Consider the following 93-residue polypeptide: Acylphosphatase (93 aa).

A disulfide bridge links C5 with C49. The region spanning 5–93 is the Acylphosphatase-like domain; that stretch reads CTIAWIYGRV…ETLTDFSIRY (89 aa). Catalysis depends on residues R20 and N38.

It belongs to the acylphosphatase family.

The enzyme catalyses an acyl phosphate + H2O = a carboxylate + phosphate + H(+). The chain is Acylphosphatase from Salmonella arizonae (strain ATCC BAA-731 / CDC346-86 / RSK2980).